A 103-amino-acid chain; its full sequence is Large ribosomal subunit protein bL21 (103 aa).

The protein belongs to the bacterial ribosomal protein bL21 family. As to quaternary structure, part of the 50S ribosomal subunit. Contacts protein L20.

This protein binds to 23S rRNA in the presence of protein L20. The sequence is that of Large ribosomal subunit protein bL21 from Shewanella loihica (strain ATCC BAA-1088 / PV-4).